A 189-amino-acid polypeptide reads, in one-letter code: Glucose-6-phosphate isomerase (189 aa).

Fe cation contacts are provided by His88, His90, Glu97, and His136.

This sequence belongs to the archaeal-type GPI family. Homodimer. Requires Fe cation as cofactor.

It is found in the cytoplasm. The catalysed reaction is alpha-D-glucose 6-phosphate = beta-D-fructose 6-phosphate. The protein operates within carbohydrate degradation; glycolysis; D-glyceraldehyde 3-phosphate and glycerone phosphate from D-glucose: step 2/4. This Pyrococcus abyssi (strain GE5 / Orsay) protein is Glucose-6-phosphate isomerase (pgiA).